The sequence spans 346 residues: MFARQAIRAAQPLKSQYRRYATESTSGGGSNAALYAGLAAAAGAGAYYFLNQGDNAAKVKDAAKDAEAKAKEAVGQGKSKVEGAVGKAAFTGGDQGFISLKLDSVENINHNTKKFRFELPESDQVSGLQVASALLTKFKGPEMQKPAIRPYTPTSDESEQGFIDLLVKKYPNGVMSEHMHDMVPGQRLDFKGPIPKYPWSANKHDHIALIAGGTGITPMYQLARAIFNNPADKTKVTLVFANVTEEDILLKREFEDLENTYPQRFRAFYVLDNPPKSWSGGKGFVNKELLKTVLPEPKTENVKVFVCGPPGMYKAISGPKVSPSDQGELAGILKELGYSKEQVYKF.

The chain crosses the membrane as a helical span at residues 28–50 (GGSNAALYAGLAAAAGAGAYYFL). The FAD-binding FR-type domain maps to 95-200 (QGFISLKLDS…KGPIPKYPWS (106 aa)). 203-238 (KHDHIALIAGGTGITPMYQLARAIFNNPADKTKVTL) contacts FAD.

This sequence belongs to the flavoprotein pyridine nucleotide cytochrome reductase family. It depends on FAD as a cofactor.

Its subcellular location is the mitochondrion outer membrane. The enzyme catalyses 2 Fe(III)-[cytochrome b5] + NADH = 2 Fe(II)-[cytochrome b5] + NAD(+) + H(+). Functionally, may mediate the reduction of outer membrane cytochrome b5. The polypeptide is NADH-cytochrome b5 reductase 2 (mcr1) (Botryotinia fuckeliana (strain B05.10) (Noble rot fungus)).